Reading from the N-terminus, the 401-residue chain is 3-hydroxyisobutyryl-CoA hydrolase-like protein 1, mitochondrial (401 aa).

The transit peptide at 1–26 directs the protein to the mitochondrion; it reads MHNAKGLLGRIVRDKLWRFGYRRSLC.

It belongs to the enoyl-CoA hydratase/isomerase family.

It localises to the mitochondrion. This chain is 3-hydroxyisobutyryl-CoA hydrolase-like protein 1, mitochondrial, found in Arabidopsis thaliana (Mouse-ear cress).